A 1134-amino-acid polypeptide reads, in one-letter code: MDCSLVRTLVHRYCAGEENWVDSRTIYVGHREPPPGAEAYIPQRYPDNRIVSSKYTFWNFIPKNLFEQFRRVANFYFLIIFLVQLIIDTPTSPVTSGLPLFFVITVTAIKQGYEDWLRHKADNAMNQCPVHFIQHGKLVRKQSRKLRVGDIVMVKEDETFPCDLIFLSSNRGDGTCHVTTASLDGESSHKTHYAVQDTKGFHTEEDIGGLHATIECEQPQPDLYKFVGRINVYSDLNDPVVRPLGSENLLLRGATLKNTEKIFGVAIYTGMETKMALNYQSKSQKRSAVEKSMNAFLIVYLCILISKALINTVLKYMWQSEPFRDEPWYNQKTESERQRNLFLKAFTDFLAFMVLFNYIIPVSMYVTVEMQKFLGSYFITWDEDMFDEETGEGPLVNTSDLNEELGQVEYIFTDKTGTLTENNMEFKECCIEGHVYVPHVICNGQVLPESSGIDMIDSSPSVNGREREELFFRALCLCHTVQVKDDDSVDGPRKSPDGGKSCVYISSSPDEVALVEGVQRLGFTYLRLKDNYMEILNRENHIERFELLEILSFDSVRRRMSVIVKSATGEIYLFCKGADSSIFPRVIEGKVDQIRARVERNAVEGLRTLCVAYKRLIQEEYEGICKLLQAAKVALQDREKKLAEAYEQIEKDLTLLGATAVEDRLQEKAADTIEALQKAGIKVWVLTGDKMETAAATCYACKLFRRNTQLLELTTKRIEEQSLHDVLFELSKTVLRHSGSLTRDNLSGLSADMQDYGLIIDGAALSLIMKPREDGSSGNYRELFLEICRSCSAVLCCRMAPLQKAQIVKLIKFSKEHPITLAIGDGANDVSMILEAHVGIGVIGKEGRQAARNSDYAIPKFKHLKKMLLVHGHFYYIRISELVQYFFYKNVCFIFPQFLYQFFCGFSQQTLYDTAYLTLYNISFTSLPILLYSLMEQHVGIDVLKRDPTLYRDVAKNALLRWRVFIYWTLLGLFDALVFFFGAYFVFENTTVTSNGQIFGNWTFGTLVFTVMVFTVTLKLALDTHYWTWINHFVIWGSLLFYVVFSLLWGGVIWPFLNYQRMYYVFIQMLSSGPAWLAIVLLVTISLLPDVLKKVLCRQLWPTATERVQTKSQCLSVEQSTIFMLSQTSSSLSF.

The Cytoplasmic segment spans residues 1 to 61 (MDCSLVRTLV…SSKYTFWNFI (61 aa)). A helical membrane pass occupies residues 62–82 (PKNLFEQFRRVANFYFLIIFL). Over 83 to 88 (VQLIID) the chain is Extracellular. Residues 89–110 (TPTSPVTSGLPLFFVITVTAIK) form a helical membrane-spanning segment. Residues 111-296 (QGYEDWLRHK…SAVEKSMNAF (186 aa)) lie on the Cytoplasmic side of the membrane. Residues 297 to 318 (LIVYLCILISKALINTVLKYMW) traverse the membrane as a helical segment. Topologically, residues 319 to 349 (QSEPFRDEPWYNQKTESERQRNLFLKAFTDF) are extracellular. Residues 350 to 372 (LAFMVLFNYIIPVSMYVTVEMQK) form a helical membrane-spanning segment. Residues 373–881 (FLGSYFITWD…GHFYYIRISE (509 aa)) lie on the Cytoplasmic side of the membrane. Residue Asp414 is the 4-aspartylphosphate intermediate of the active site. Residues Asp414, Lys415, Thr416, Glu511, Phe553, Lys576, Arg607, Thr687, Gly688, and Asp689 each contribute to the ATP site. Mg(2+) is bound at residue Asp414. Thr416 contributes to the Mg(2+) binding site. Residue Ser738 is modified to Phosphoserine. Positions 798 and 804 each coordinate ATP. Asp825 lines the Mg(2+) pocket. Asn828 and Asp829 together coordinate ATP. Asp829 contributes to the Mg(2+) binding site. Residues 882–902 (LVQYFFYKNVCFIFPQFLYQF) traverse the membrane as a helical segment. Residues 903 to 914 (FCGFSQQTLYDT) lie on the Extracellular side of the membrane. A helical transmembrane segment spans residues 915-934 (AYLTLYNISFTSLPILLYSL). Topologically, residues 935–964 (MEQHVGIDVLKRDPTLYRDVAKNALLRWRV) are cytoplasmic. A helical membrane pass occupies residues 965–986 (FIYWTLLGLFDALVFFFGAYFV). At 987–1000 (FENTTVTSNGQIFG) the chain is on the extracellular side. A helical transmembrane segment spans residues 1001-1023 (NWTFGTLVFTVMVFTVTLKLALD). Topologically, residues 1024-1029 (THYWTW) are cytoplasmic. Residues 1030 to 1050 (INHFVIWGSLLFYVVFSLLWG) form a helical membrane-spanning segment. The Extracellular segment spans residues 1051–1068 (GVIWPFLNYQRMYYVFIQ). The chain crosses the membrane as a helical span at residues 1069-1093 (MLSSGPAWLAIVLLVTISLLPDVLK). Topologically, residues 1094–1134 (KVLCRQLWPTATERVQTKSQCLSVEQSTIFMLSQTSSSLSF) are cytoplasmic.

Belongs to the cation transport ATPase (P-type) (TC 3.A.3) family. Type IV subfamily. In terms of assembly, component of a P4-ATPase flippase complex which consists of a catalytic alpha subunit ATP11A and an accessory beta subunit TMEM30A. Mg(2+) serves as cofactor. In terms of processing, proteolytically cleaved by CASP3. Widely expressed. Expressed in myoblasts.

It localises to the cell membrane. The protein resides in the early endosome. The protein localises to the recycling endosome. Its subcellular location is the endoplasmic reticulum membrane. The catalysed reaction is ATP + H2O + phospholipidSide 1 = ADP + phosphate + phospholipidSide 2.. The enzyme catalyses a 1,2-diacyl-sn-glycero-3-phospho-L-serine(out) + ATP + H2O = a 1,2-diacyl-sn-glycero-3-phospho-L-serine(in) + ADP + phosphate + H(+). It carries out the reaction a 1,2-diacyl-sn-glycero-3-phosphoethanolamine(out) + ATP + H2O = a 1,2-diacyl-sn-glycero-3-phosphoethanolamine(in) + ADP + phosphate + H(+). With respect to regulation, the flippase activity is inactivated by caspase-mediated cleavage in apoptotic cells, allowing for PS exposure on the cell surface and engulfment of apoptotic cells by macrophages. The ATPase activity is up-regulated by aminophospholipids PS and PE and down-regulated by increasing intracellular Ca2+ levels. Its function is as follows. Catalytic component of a P4-ATPase flippase complex which catalyzes the hydrolysis of ATP coupled to the transport of aminophospholipids, phosphatidylserines (PS) and phosphatidylethanolamines (PE), from the outer to the inner leaflet of the plasma membrane. Does not show flippase activity toward phosphatidylcholine (PC). Contributes to the maintenance of membrane lipid asymmetry with a specific role in morphogenesis of muscle cells. In myoblasts, mediates PS enrichment at the inner leaflet of plasma membrane, triggering PIEZO1-dependent Ca2+ influx and Rho GTPases signal transduction, subsequently leading to the assembly of cortical actomyosin fibers and myotube formation. May be involved in the uptake of farnesyltransferase inhibitor drugs, such as lonafarnib. The sequence is that of Phospholipid-transporting ATPase IH (ATP11A) from Homo sapiens (Human).